A 1003-amino-acid chain; its full sequence is Phosphatidylinositol 4,5-bisphosphate 5-phosphatase A (1003 aa).

Disordered regions lie at residues 1 to 110 and 147 to 414; these read MEGQ…AAKS and AMPR…QPTC. An RSXSXX motif 1 motif is present at residues 6-11; it reads RSGSAR. Over residues 11-24 the composition is skewed to low complexity; it reads RPGTRTGLGPLPGT. Residue Arg56 is modified to Asymmetric dimethylarginine; alternate. An Omega-N-methylarginine; alternate modification is found at Arg56. Position 65 is an omega-N-methylarginine (Arg65). An Asymmetric dimethylarginine modification is found at Arg76. Residue Arg83 is modified to Asymmetric dimethylarginine; alternate. Residue Arg83 is modified to Omega-N-methylarginine; alternate. The segment covering 160 to 174 has biased composition (polar residues); it reads LTPTSRDQKQLSPTS. A Phosphoserine modification is found at Ser171. Over residues 180–196 the composition is skewed to low complexity; sequence ALATSGLSLALASQEQP. A compositionally biased stretch (pro residues) spans 197-210; it reads PQSPSSPSPVPSPV. Residues 284-294 show a composition bias toward basic and acidic residues; that stretch reads ARPEAPRHSPE. A phosphoserine mark is found at Ser292 and Ser325. The segment covering 338–348 has biased composition (pro residues); sequence VPPPLPKPPRS. Positions 346 to 351 match the SH3-binding motif; the sequence is PRSPSR. 2 stretches are compositionally biased toward low complexity: residues 349-361 and 390-413; these read PSRS…NRSP and QAQE…AQPT. The RSXSXX motif 2 signature appears at 351-356; sequence RSPSRS. Residues 422 to 725 are catalytic; the sequence is ITVVTWNVGT…SDHKPVAAQF (304 aa). The required for ruffle localization stretch occupies residues 726–837; sequence ILQFAFRDDV…IGVTEPFQIS (112 aa). The segment at 839-1003 is disordered; that stretch reads PTSESASSST…LGLEEGGLGP (165 aa). Over residues 840–855 the composition is skewed to low complexity; the sequence is TSESASSSTDSSGTSS. Short sequence motifs (RSXSXX motif) lie at residues 871 to 876 and 882 to 887; these read RSPSPG and RSRSPG. Residue Ser900 is modified to Phosphoserine. 2 stretches are compositionally biased toward low complexity: residues 907–919 and 927–943; these read SRSP…QLPR and SSSS…GLPG. Positions 908-913 match the RSXSXX motif 5 motif; the sequence is RSPSPQ. Phosphoserine is present on Ser987.

Belongs to the inositol 1,4,5-trisphosphate 5-phosphatase type II family.

It localises to the cytoplasm. The enzyme catalyses 1D-myo-inositol 1,4,5-trisphosphate + H2O = 1D-myo-inositol 1,4-bisphosphate + phosphate. It catalyses the reaction 1D-myo-inositol 1,3,4,5-tetrakisphosphate + H2O = 1D-myo-inositol 1,3,4-trisphosphate + phosphate. The catalysed reaction is a 1,2-diacyl-sn-glycero-3-phospho-(1D-myo-inositol-4,5-bisphosphate) + H2O = a 1,2-diacyl-sn-glycero-3-phospho-(1D-myo-inositol 4-phosphate) + phosphate. In terms of biological role, inositol 5-phosphatase, which converts inositol 1,4,5-trisphosphate to inositol 1,4-bisphosphate. Also converts phosphatidylinositol 4,5-bisphosphate to phosphatidylinositol 4-phosphate and inositol 1,3,4,5-tetrakisphosphate to inositol 1,3,4-trisphosphate in vitro. May be involved in modulation of the function of inositol and phosphatidylinositol polyphosphate-binding proteins that are present at membranes ruffles. In Mus musculus (Mouse), this protein is Phosphatidylinositol 4,5-bisphosphate 5-phosphatase A (Inpp5j).